The sequence spans 290 residues: Acetyl-coenzyme A carboxylase carboxyl transferase subunit beta (290 aa).

The CoA carboxyltransferase N-terminal domain occupies Ile-28–Asp-290. Positions 32, 35, 51, and 54 each coordinate Zn(2+). Residues Cys-32–Cys-54 form a C4-type zinc finger.

The protein belongs to the AccD/PCCB family. As to quaternary structure, acetyl-CoA carboxylase is a heterohexamer composed of biotin carboxyl carrier protein (AccB), biotin carboxylase (AccC) and two subunits each of ACCase subunit alpha (AccA) and ACCase subunit beta (AccD). The cofactor is Zn(2+).

The protein localises to the cytoplasm. The enzyme catalyses N(6)-carboxybiotinyl-L-lysyl-[protein] + acetyl-CoA = N(6)-biotinyl-L-lysyl-[protein] + malonyl-CoA. It functions in the pathway lipid metabolism; malonyl-CoA biosynthesis; malonyl-CoA from acetyl-CoA: step 1/1. Its activity is regulated as follows. Inhibited by pyrrolidine dione antibiotics moiramide B (CPD1) and CPD2. Component of the acetyl coenzyme A carboxylase (ACC) complex. Biotin carboxylase (BC) catalyzes the carboxylation of biotin on its carrier protein (BCCP) and then the CO(2) group is transferred by the transcarboxylase to acetyl-CoA to form malonyl-CoA. The protein is Acetyl-coenzyme A carboxylase carboxyl transferase subunit beta of Bacillus subtilis (strain 168).